The following is a 156-amino-acid chain: E3 ubiquitin-protein ligase RNF181 (156 aa).

The RING-type; atypical zinc-finger motif lies at 79–120; that stretch reads CPVCLLEFEEGETVRQLPCEHLFHSACILPWLGKTNSCPLCR.

This sequence belongs to the RNF181 family.

It catalyses the reaction S-ubiquitinyl-[E2 ubiquitin-conjugating enzyme]-L-cysteine + [acceptor protein]-L-lysine = [E2 ubiquitin-conjugating enzyme]-L-cysteine + N(6)-ubiquitinyl-[acceptor protein]-L-lysine.. The protein operates within protein modification; protein ubiquitination. In terms of biological role, E3 ubiquitin-protein ligase which accepts ubiquitin from an E2 ubiquitin-conjugating enzyme in the form of a thioester and then directly transfers the ubiquitin to targeted substrates. Catalyzes monoubiquitination of 26S proteasome subunit PSMC2/RPT1. The polypeptide is E3 ubiquitin-protein ligase RNF181 (rnf181) (Xenopus laevis (African clawed frog)).